Here is a 748-residue protein sequence, read N- to C-terminus: MEKEKVSLADAKEHGLTETEFVEIQKILGRIPNSTELGIFSAMWSEHCSYKNSILKLKTLPTKSDKLLAGAGEENAGAMDIGDGLAVVFKIESHNHPTAVEPYQGAATGVGGIMRDIFTMGARPITSLNSLRFGDPKEPRNKYLLTRAVKGIGDYGNSLGIAVGGGELFLHPTFTKNPLVNAMTVGIAKHDEMASASTKGKVGNKVYIVGATTGRDGIHGASFASKDLTKESEEKRSAVQVGDPFMEKLLMEASLEAIQKKLLVGIQDMGAAGISCATSEMSAKGKTGMDVDLDKVPLREADMNAYEIMLSESQERMLVIPEVGKEGELVSIFHKWGLNAVEIGTVTADGILRIRKNGTLKAEIPAESLVLGGGAPRYVREEKRPTYLDEVVKFDPNKIPDLKPDTVPQTLNSLLSSLNISSRRPLYEQYDTEVGLVKVVEPGEDGGLVRIPGTKKGIAVATDCNSRYTYLNPYEGAQIAVCESARNVAATGAEPYGVTNNLNFGNPYIPENYYVFSECVRGLGDACRFLGLPVTGGNVSFYNESPEGPVFPTPTIGMVGVIDDVAKGLRTYPRTKEDVKYALVGNFQPTISASEYLYRSQGLDTGAIPNISLEKEKQTMDALIECRKNGLLTSAKDLSLGGLLVALAKIVIAGKKGVEVNLNELQTKVPRLDALCFGETGASFIVSFLPNDETKVRESFTSKGLSVYTLGSSSAKASLSVKGDGFHWEWTTKSLEVEFESGLKSYFE.

His47 is a catalytic residue. Residues Tyr50 and Lys90 each coordinate ATP. Glu92 contacts Mg(2+). Residues 93-96 (SHNH) and Arg115 contribute to the substrate site. The Proton acceptor role is filled by His94. Position 116 (Asp116) interacts with Mg(2+). A substrate-binding site is contributed by Gln240. Residue Asp268 coordinates Mg(2+). 312 to 314 (ESQ) lines the substrate pocket. 2 residues coordinate ATP: Asn500 and Gly537. Asn538 contacts Mg(2+). Ser540 is a binding site for substrate.

Belongs to the FGAMS family. Monomer. Part of the FGAM synthase complex composed of 1 PurL, 1 PurQ and 2 PurS subunits.

It localises to the cytoplasm. The catalysed reaction is N(2)-formyl-N(1)-(5-phospho-beta-D-ribosyl)glycinamide + L-glutamine + ATP + H2O = 2-formamido-N(1)-(5-O-phospho-beta-D-ribosyl)acetamidine + L-glutamate + ADP + phosphate + H(+). The protein operates within purine metabolism; IMP biosynthesis via de novo pathway; 5-amino-1-(5-phospho-D-ribosyl)imidazole from N(2)-formyl-N(1)-(5-phospho-D-ribosyl)glycinamide: step 1/2. In terms of biological role, part of the phosphoribosylformylglycinamidine synthase complex involved in the purines biosynthetic pathway. Catalyzes the ATP-dependent conversion of formylglycinamide ribonucleotide (FGAR) and glutamine to yield formylglycinamidine ribonucleotide (FGAM) and glutamate. The FGAM synthase complex is composed of three subunits. PurQ produces an ammonia molecule by converting glutamine to glutamate. PurL transfers the ammonia molecule to FGAR to form FGAM in an ATP-dependent manner. PurS interacts with PurQ and PurL and is thought to assist in the transfer of the ammonia molecule from PurQ to PurL. This Leptospira biflexa serovar Patoc (strain Patoc 1 / Ames) protein is Phosphoribosylformylglycinamidine synthase subunit PurL.